Consider the following 139-residue polypeptide: Ribulose bisphosphate carboxylase small subunit (139 aa).

It belongs to the RuBisCO small chain family. Heterohexadecamer of 8 large and 8 small subunits.

Its subcellular location is the plastid. The protein localises to the chloroplast. Its function is as follows. RuBisCO catalyzes two reactions: the carboxylation of D-ribulose 1,5-bisphosphate, the primary event in carbon dioxide fixation, as well as the oxidative fragmentation of the pentose substrate in the photorespiration process. Both reactions occur simultaneously and in competition at the same active site. Although the small subunit is not catalytic it is essential for maximal activity. The chain is Ribulose bisphosphate carboxylase small subunit from Ectocarpus siliculosus (Brown alga).